The following is a 226-amino-acid chain: Uracil-DNA glycosylase (226 aa).

D64 acts as the Proton acceptor in catalysis.

It belongs to the uracil-DNA glycosylase (UDG) superfamily. UNG family.

It localises to the cytoplasm. It catalyses the reaction Hydrolyzes single-stranded DNA or mismatched double-stranded DNA and polynucleotides, releasing free uracil.. In terms of biological role, excises uracil residues from the DNA which can arise as a result of misincorporation of dUMP residues by DNA polymerase or due to deamination of cytosine. In Vibrio parahaemolyticus serotype O3:K6 (strain RIMD 2210633), this protein is Uracil-DNA glycosylase.